A 781-amino-acid polypeptide reads, in one-letter code: MAAALLLLRGLRPGPEPRPRRLWGLLSGRGPGLSSGAGARRPYAARGTPVGPAAAGGHAPQSLLLRILTPSFEGISGLLLKQHIVPNAVRLWPLSGSTLYFNTSRMKQKNKDNDKPKGKTPEDDEEEKRRKEREDQMYRERLRTLFIIALVMSLLNSLSTSGGSISWADFVNEMLAKGEVQRVQVVPESDVVEVYLHPGAVVFGRPRLALMYRMQVANIDKFEEKLRAAEDELNIESKDRIPVSYKRTGFFGNALYALGMTAVGLAILWYVFRLAGMTGREGGFSAFNQLKMARFTIVDGKTGKGVSFQDVAGMHEAKLEVREFVDYLKSPERFLQLGAKVPKGALLLGPPGCGKTLLAKAVATEAQVPFLAMAGPEFVEVIGGLGAARVRSLFKEARARAPCIVYIDEIDAVGKKRSTSMSGFSNTEEEQTLNQLLVEMDGMGTTDHVIVLASTNRADVLDNALMRPGRLDRHVFIDLPTLQERREIFEQHLKGLKLTQPSSFYSQRLAELTPGFSGADIANICNEAALHAAREGHTSVHTFNFEYAVERVIAGTAKKSKILSKEEQRVVAFHESGHALVGWLLEHTEAVMKVSIAPRTNAALGFSQMLPRDQYLFTKEQLFERMCMALGGRAAEAISFSRVTSGAQDDLRKVTRIAYSMVKQFGMAPSIGPVSFPEAQEGLMGIGRRPFSQGLQQMMDHEAKLLVAKAYRHTEKVLLDNLDKLQALANALLEKEVINYEDIEALIGPPPHGPKKMIAPQKWIDAEKERQASGEEEAPAP.

The N-terminal 43 residues, 1 to 43 (MAAALLLLRGLRPGPEPRPRRLWGLLSGRGPGLSSGAGARRPY), are a transit peptide targeting the mitochondrion. Disordered stretches follow at residues 22-56 (LWGL…AAAG) and 103-135 (TSRM…ERED). The segment covering 36-56 (GAGARRPYAARGTPVGPAAAG) has biased composition (low complexity). The propeptide at 44 to 105 (AARGTPVGPA…GSTLYFNTSR (62 aa)) is removed in mature form. Residues 106–144 (MKQKNKDNDKPKGKTPEDDEEEKRRKEREDQMYRERLRT) lie on the Mitochondrial matrix side of the membrane. Basic and acidic residues predominate over residues 109 to 135 (KNKDNDKPKGKTPEDDEEEKRRKERED). A helical transmembrane segment spans residues 145–165 (LFIIALVMSLLNSLSTSGGSI). The Mitochondrial intermembrane portion of the chain corresponds to 166-248 (SWADFVNEML…DRIPVSYKRT (83 aa)). Residues 249–269 (GFFGNALYALGMTAVGLAILW) traverse the membrane as a helical segment. At 270 to 781 (YVFRLAGMTG…ASGEEEAPAP (512 aa)) the chain is on the mitochondrial matrix side. The ATP site is built by Ala-312, Gly-352, Cys-353, Gly-354, Lys-355, Thr-356, and Leu-357. Tyr-505 is modified (3'-nitrotyrosine). His-574 contributes to the Zn(2+) binding site. Glu-575 is a catalytic residue. Zn(2+) contacts are provided by His-578 and Asp-650. The segment at 701-781 (HEAKLLVAKA…ASGEEEAPAP (81 aa)) is interaction with PPIF.

The protein in the N-terminal section; belongs to the AAA ATPase family. It in the C-terminal section; belongs to the peptidase M41 family. Forms heterohexamers with SPG7 and AFG3L1. The m-AAA protease is either composed of homohexamers of AFG3L2 or heterohexamers of AFG3L1, AFG3L2 and/or SPG7. Component of the mitochondrial permeability transition pore complex (mPTPC), at least composed of SPG7, VDAC1 and PPIF. Interacts with MAIP1. Zn(2+) serves as cofactor. In terms of processing, upon import into the mitochondrion, the N-terminal transit peptide is cleaved by the mitochondrial-processing peptidase (MPP) to generate an intermediate form which undergoes a second proteolytic cleavage mediated by proteases AFG3L1 and/or AFG3L2 removing an additional N-terminal fragment to generate the proteolytically active mature form. As to expression, expressed in the brain and retina (at protein level).

It localises to the mitochondrion inner membrane. The enzyme catalyses ATP + H2O = ADP + phosphate + H(+). Its function is as follows. Catalytic component of the m-AAA protease, a protease that plays a key role in proteostasis of inner mitochondrial membrane proteins, and which is essential for axonal and neuron development. SPG7 possesses both ATPase and protease activities: the ATPase activity is required to unfold substrates, threading them into the internal proteolytic cavity for hydrolysis into small peptide fragments. The m-AAA protease exerts a dual role in the mitochondrial inner membrane: it mediates the processing of specific regulatory proteins and ensures protein quality control by degrading misfolded polypeptides. Mediates protein maturation of the mitochondrial ribosomal subunit MRPL32/bL32m by catalyzing the cleavage of the presequence of MRPL32/bL32m prior to assembly into the mitochondrial ribosome. Acts as a regulator of calcium in neurons by mediating degradation of SMDT1/EMRE before its assembly with the uniporter complex, limiting the availability of SMDT1/EMRE for MCU assembly and promoting efficient assembly of gatekeeper subunits with MCU. Also regulates mitochondrial calcium by catalyzing degradation of MCU. Plays a role in the formation and regulation of the mitochondrial permeability transition pore (mPTP) and its proteolytic activity is dispensable for this function. In Mus musculus (Mouse), this protein is Mitochondrial inner membrane m-AAA protease component paraplegin.